Here is a 482-residue protein sequence, read N- to C-terminus: MKKSIETPLLLNTKQSQDEDKEKIRWEKMKKVASMAAPMVAVNMSQYLLQATSTMIVGHRSELALAGIALGSSFANVTGFGVLFGLSGSLETLCGQAYGAKQYHKLGSYTFTSIVFLLIISVPISILWMFMNQILLLLHQDPQIAELAGVYCLWLVPALFGYSVLESLVRYFQSQSLIYPMVLSSLAALSFHVPLCWLMVHKFDFGAKGAAASIGISYWLNAVFLWVYMKRSSRCVETRIYMSKDVFVHTNIFFQFAIPSAMMCCLEWLAFEVITLLSGLLPNSKLETSVISICLTTSSLHYNLVNGIGDAASTNVANELGAGNPRGARDSAAAAIIIAAVESVIVSSSLFLSRSVWPYAYSNVEEVISYVTDITPILCISILMDSFLTVLSGIVRGTGWQKIGAYVNITSYYVIGIPVGLLLCFHLHFNGKGLWAGLVTGSTLQTLILFLVIGFTNWSKEAIKARERIGDEKVWRHDSLLN.

12 helical membrane passes run 32–49, 64–84, 111–131, 144–164, 180–200, 209–229, 261–281, 289–309, 332–352, 374–394, 403–423, and 435–455; these read VASMAAPMVAVNMSQYLL, ALAGIALGSSFANVTGFGVLF, FTSIVFLLIISVPISILWMFM, IAELAGVYCLWLVPALFGYSV, PMVLSSLAALSFHVPLCWLMV, GAAASIGISYWLNAVFLWVYM, AMMCCLEWLAFEVITLLSGLL, SVISICLTTSSLHYNLVNGIG, AAAAIIIAAVESVIVSSSLFL, ITPILCISILMDSFLTVLSGI, IGAYVNITSYYVIGIPVGLLL, and WAGLVTGSTLQTLILFLVIGF.

The protein belongs to the multi antimicrobial extrusion (MATE) (TC 2.A.66.1) family.

The protein resides in the membrane. This is Protein DETOXIFICATION 9 from Arabidopsis thaliana (Mouse-ear cress).